Reading from the N-terminus, the 294-residue chain is Nucleotide-binding protein CPF_0343 (294 aa).

8 to 15 (GLSGAGKT) serves as a coordination point for ATP. A GTP-binding site is contributed by 59–62 (DIRG).

It belongs to the RapZ-like family.

In terms of biological role, displays ATPase and GTPase activities. The sequence is that of Nucleotide-binding protein CPF_0343 from Clostridium perfringens (strain ATCC 13124 / DSM 756 / JCM 1290 / NCIMB 6125 / NCTC 8237 / Type A).